Reading from the N-terminus, the 360-residue chain is S-adenosylmethionine:tRNA ribosyltransferase-isomerase (360 aa).

The protein belongs to the QueA family. In terms of assembly, monomer.

The protein resides in the cytoplasm. It carries out the reaction 7-aminomethyl-7-carbaguanosine(34) in tRNA + S-adenosyl-L-methionine = epoxyqueuosine(34) in tRNA + adenine + L-methionine + 2 H(+). The protein operates within tRNA modification; tRNA-queuosine biosynthesis. Transfers and isomerizes the ribose moiety from AdoMet to the 7-aminomethyl group of 7-deazaguanine (preQ1-tRNA) to give epoxyqueuosine (oQ-tRNA). The sequence is that of S-adenosylmethionine:tRNA ribosyltransferase-isomerase from Rhizobium meliloti (strain 1021) (Ensifer meliloti).